The primary structure comprises 427 residues: Adenylosuccinate synthetase (427 aa).

Residues 11-17 and 39-41 contribute to the GTP site; these read GDEGKGK and GHT. Aspartate 12 (proton acceptor) is an active-site residue. Mg(2+) is bound by residues aspartate 12 and glycine 39. IMP is bound by residues 12 to 15, 37 to 40, threonine 132, arginine 146, glutamine 223, threonine 238, and arginine 302; these read DEGK and NAGH. Residue histidine 40 is the Proton donor of the active site. 298 to 304 provides a ligand contact to substrate; sequence TTTGRPR. GTP is bound by residues arginine 304, 330 to 332, and 412 to 414; these read KLD and GVG.

Belongs to the adenylosuccinate synthetase family. As to quaternary structure, homodimer. Requires Mg(2+) as cofactor.

The protein resides in the cytoplasm. It carries out the reaction IMP + L-aspartate + GTP = N(6)-(1,2-dicarboxyethyl)-AMP + GDP + phosphate + 2 H(+). The protein operates within purine metabolism; AMP biosynthesis via de novo pathway; AMP from IMP: step 1/2. Its function is as follows. Plays an important role in the de novo pathway and in the salvage pathway of purine nucleotide biosynthesis. Catalyzes the first committed step in the biosynthesis of AMP from IMP. This is Adenylosuccinate synthetase (purA) from Dictyostelium discoideum (Social amoeba).